We begin with the raw amino-acid sequence, 59 residues long: Large ribosomal subunit protein uL30 (59 aa).

It belongs to the universal ribosomal protein uL30 family. In terms of assembly, part of the 50S ribosomal subunit.

The chain is Large ribosomal subunit protein uL30 from Clostridium kluyveri (strain ATCC 8527 / DSM 555 / NBRC 12016 / NCIMB 10680 / K1).